A 366-amino-acid chain; its full sequence is Polyamine aminopropyltransferase 2 (366 aa).

Residues Lys-20 to Val-58 are compositionally biased toward basic and acidic residues. The disordered stretch occupies residues Lys-20–Glu-61. A PABS domain is found at Asp-74–Asn-305. Gln-100 is a binding site for S-methyl-5'-thioadenosine. Residues His-129 and Asp-153 each coordinate spermidine. S-methyl-5'-thioadenosine contacts are provided by residues Asp-173 and Asp-207–Ala-208. Residue Asp-225 is the Proton acceptor of the active site.

Belongs to the spermidine/spermine synthase family. In terms of assembly, homodimer or homotetramer.

Its subcellular location is the cytoplasm. The enzyme catalyses S-adenosyl 3-(methylsulfanyl)propylamine + putrescine = S-methyl-5'-thioadenosine + spermidine + H(+). It functions in the pathway amine and polyamine biosynthesis; spermidine biosynthesis; spermidine from putrescine: step 1/1. Functionally, catalyzes the irreversible transfer of a propylamine group from the amino donor S-adenosylmethioninamine (decarboxy-AdoMet) to putrescine (1,4-diaminobutane) to yield spermidine. In Bacillus cereus (strain ATCC 14579 / DSM 31 / CCUG 7414 / JCM 2152 / NBRC 15305 / NCIMB 9373 / NCTC 2599 / NRRL B-3711), this protein is Polyamine aminopropyltransferase 2.